A 128-amino-acid chain; its full sequence is Ribonuclease P protein component (128 aa).

The protein belongs to the RnpA family. Consists of a catalytic RNA component (M1 or rnpB) and a protein subunit.

The enzyme catalyses Endonucleolytic cleavage of RNA, removing 5'-extranucleotides from tRNA precursor.. RNaseP catalyzes the removal of the 5'-leader sequence from pre-tRNA to produce the mature 5'-terminus. It can also cleave other RNA substrates such as 4.5S RNA. The protein component plays an auxiliary but essential role in vivo by binding to the 5'-leader sequence and broadening the substrate specificity of the ribozyme. This chain is Ribonuclease P protein component, found in Prochlorococcus marinus (strain MIT 9215).